Here is a 287-residue protein sequence, read N- to C-terminus: Polyamine aminopropyltransferase (287 aa).

The PABS domain occupies 5–238 (EIWYETLHAN…GIMTFAWASN (234 aa)). Residue Gln-33 coordinates S-methyl-5'-thioadenosine. Positions 64 and 88 each coordinate spermidine. S-methyl-5'-thioadenosine-binding positions include Glu-108 and 140 to 141 (DG). The active-site Proton acceptor is the Asp-158. 158–161 (DCTD) is a binding site for spermidine. Pro-165 is an S-methyl-5'-thioadenosine binding site.

Belongs to the spermidine/spermine synthase family. In terms of assembly, homodimer or homotetramer.

The protein resides in the cytoplasm. It catalyses the reaction S-adenosyl 3-(methylsulfanyl)propylamine + putrescine = S-methyl-5'-thioadenosine + spermidine + H(+). It functions in the pathway amine and polyamine biosynthesis; spermidine biosynthesis; spermidine from putrescine: step 1/1. In terms of biological role, catalyzes the irreversible transfer of a propylamine group from the amino donor S-adenosylmethioninamine (decarboxy-AdoMet) to putrescine (1,4-diaminobutane) to yield spermidine. The polypeptide is Polyamine aminopropyltransferase (Pectobacterium carotovorum subsp. carotovorum (strain PC1)).